The following is a 262-amino-acid chain: MRRTLYRLMIELTNGRFTSYILRKFAQSRLSSIIIPSYAKVFQINQDEMEKGLKEYRTLHELFTRKLKEGKRSIDTDASSIVSPVDGVFADYGPIEDAKTFDIKGKRYSIVDMLGNEERAQRYAGGTYMVIYLSPSHYHRIHSPLSGSVTERFVLGRKSYPVNAAGMEYGKEPLSKNYRSVTEVNSDGEHMALVKVGAMFVNSIELLHERDTVQKGEEMAYFTFGSTVVLLFEKDMIEVVQELKSGQELRLGEKIATRLAHK.

Residues Asp-86, His-142, and Ser-226 each act as charge relay system; for autoendoproteolytic cleavage activity in the active site. Catalysis depends on Ser-226, which acts as the Schiff-base intermediate with substrate; via pyruvic acid; for decarboxylase activity. Ser-226 carries the post-translational modification Pyruvic acid (Ser); by autocatalysis.

Belongs to the phosphatidylserine decarboxylase family. PSD-B subfamily. Prokaryotic type I sub-subfamily. As to quaternary structure, heterodimer of a large membrane-associated beta subunit and a small pyruvoyl-containing alpha subunit. Requires pyruvate as cofactor. Is synthesized initially as an inactive proenzyme. Formation of the active enzyme involves a self-maturation process in which the active site pyruvoyl group is generated from an internal serine residue via an autocatalytic post-translational modification. Two non-identical subunits are generated from the proenzyme in this reaction, and the pyruvate is formed at the N-terminus of the alpha chain, which is derived from the carboxyl end of the proenzyme. The autoendoproteolytic cleavage occurs by a canonical serine protease mechanism, in which the side chain hydroxyl group of the serine supplies its oxygen atom to form the C-terminus of the beta chain, while the remainder of the serine residue undergoes an oxidative deamination to produce ammonia and the pyruvoyl prosthetic group on the alpha chain. During this reaction, the Ser that is part of the protease active site of the proenzyme becomes the pyruvoyl prosthetic group, which constitutes an essential element of the active site of the mature decarboxylase.

It localises to the cell membrane. It carries out the reaction a 1,2-diacyl-sn-glycero-3-phospho-L-serine + H(+) = a 1,2-diacyl-sn-glycero-3-phosphoethanolamine + CO2. It functions in the pathway phospholipid metabolism; phosphatidylethanolamine biosynthesis; phosphatidylethanolamine from CDP-diacylglycerol: step 2/2. Functionally, catalyzes the formation of phosphatidylethanolamine (PtdEtn) from phosphatidylserine (PtdSer). In Bacillus thuringiensis (strain Al Hakam), this protein is Phosphatidylserine decarboxylase proenzyme.